The sequence spans 337 residues: Peptide methionine sulfoxide reductase MsrA/MsrB (337 aa).

A peptide methionine sulfoxide reductase A region spans residues 28-181 (KDIYLAGGCF…PGGYCHVDLS (154 aa)). Cys36 is an active-site residue. The MsrB domain occupies 198–321 (KDELKAKLSD…NGASLKFIPL (124 aa)). Cys310 acts as the Nucleophile in catalysis.

The protein in the N-terminal section; belongs to the MsrA Met sulfoxide reductase family. This sequence in the C-terminal section; belongs to the MsrB Met sulfoxide reductase family.

The catalysed reaction is L-methionyl-[protein] + [thioredoxin]-disulfide + H2O = L-methionyl-(S)-S-oxide-[protein] + [thioredoxin]-dithiol. The enzyme catalyses [thioredoxin]-disulfide + L-methionine + H2O = L-methionine (S)-S-oxide + [thioredoxin]-dithiol. It carries out the reaction L-methionyl-[protein] + [thioredoxin]-disulfide + H2O = L-methionyl-(R)-S-oxide-[protein] + [thioredoxin]-dithiol. Its function is as follows. Has an important function as a repair enzyme for proteins that have been inactivated by oxidation. Catalyzes the reversible oxidation-reduction of methionine sulfoxide in proteins to methionine. This is Peptide methionine sulfoxide reductase MsrA/MsrB (msrAB) from Campylobacter fetus.